The chain runs to 86 residues: Anti-adapter protein IraP (86 aa).

The stretch at 1-38 (MKNLIAELLVKLAQKEEEAKELTVQVEALEIVVTALLR) forms a coiled coil.

It belongs to the IraP family. In terms of assembly, interacts with RssB.

It localises to the cytoplasm. Functionally, inhibits RpoS proteolysis by regulating RssB activity, thereby increasing the stability of the sigma stress factor RpoS especially during phosphate starvation, but also in stationary phase and during nitrogen starvation. Its effect on RpoS stability is due to its interaction with RssB, which probably blocks the interaction of RssB with RpoS, and the consequent delivery of the RssB-RpoS complex to the ClpXP protein degradation pathway. This is Anti-adapter protein IraP from Klebsiella pneumoniae (strain 342).